A 62-amino-acid chain; its full sequence is Photosystem II reaction center protein Z (62 aa).

The next 2 helical transmembrane spans lie at 8 to 28 (TLLA…VLLA) and 41 to 61 (FSGS…NSFV).

The protein belongs to the PsbZ family. PSII is composed of 1 copy each of membrane proteins PsbA, PsbB, PsbC, PsbD, PsbE, PsbF, PsbH, PsbI, PsbJ, PsbK, PsbL, PsbM, PsbT, PsbY, PsbZ, Psb30/Ycf12, at least 3 peripheral proteins of the oxygen-evolving complex and a large number of cofactors. It forms dimeric complexes.

The protein localises to the plastid. It localises to the chloroplast thylakoid membrane. In terms of biological role, may control the interaction of photosystem II (PSII) cores with the light-harvesting antenna, regulates electron flow through the 2 photosystem reaction centers. PSII is a light-driven water plastoquinone oxidoreductase, using light energy to abstract electrons from H(2)O, generating a proton gradient subsequently used for ATP formation. The sequence is that of Photosystem II reaction center protein Z from Ostreococcus tauri.